Consider the following 747-residue polypeptide: Polyribonucleotide nucleotidyltransferase (747 aa).

Residues Asp-493 and Asp-499 each coordinate Mg(2+). One can recognise a KH domain in the interval 560–619 (PRIITLQINPEKIGALIGPGGKTVRGITEATGAQIDIEEDGRVYISTPDAAAAQQAVAMV). In terms of domain architecture, S1 motif spans 629-698 (GDIFLGKVVR…GTGKVSLSRR (70 aa)). Residues 705–747 (TAEDRRAAGAGRGLRDGGGRSGGSDRGGDRGPRGDDRQRPRRR) are disordered. Basic and acidic residues-rich tracts occupy residues 706 to 722 (AEDR…RDGG) and 730 to 747 (RGGD…PRRR).

This sequence belongs to the polyribonucleotide nucleotidyltransferase family. Mg(2+) is required as a cofactor.

It localises to the cytoplasm. The catalysed reaction is RNA(n+1) + phosphate = RNA(n) + a ribonucleoside 5'-diphosphate. Involved in mRNA degradation. Catalyzes the phosphorolysis of single-stranded polyribonucleotides processively in the 3'- to 5'-direction. The protein is Polyribonucleotide nucleotidyltransferase of Roseiflexus sp. (strain RS-1).